Consider the following 299-residue polypeptide: YjeF N-terminal domain-containing protein 3 (299 aa).

Residues 74 to 287 (AAALERELLE…DVRRKFALRL (214 aa)) enclose the YjeF N-terminal domain.

As to quaternary structure, interacts with APOA1. Binds to HDL. In terms of tissue distribution, expressed in theca cells in ovary and in Leydig cells in testis (at protein level). Also expressed in brain and mammary gland.

Functionally, may accelerate cholesterol efflux from endothelial cells to high-density lipoprotein (HDL) and thereby regulates angiogenesis. May orchestrate hematopoietic stem and progenitor cell emergence from the hemogenic endothelium, a type of specialized endothelium manifesting hematopoietic potential. YJEFN3-mediated cholesterol efflux activates endothelial SREBF2, the master transcription factor for cholesterol biosynthesis, which in turn transactivates NOTCH and promotes hematopoietic stem and progenitor cell emergence. May play a role in spermiogenesis and oogenesis. The polypeptide is YjeF N-terminal domain-containing protein 3 (YJEFN3) (Homo sapiens (Human)).